Reading from the N-terminus, the 209-residue chain is MIGLVGKKVGMTRIFTEDGVSIPVTVIEVEANRVTQVKDLANDGYRAVQVTTGSKKASRVTKPEAGHFAKAGVEAGRGLWEFRLAEGEEFTVGQDISVELFAEVKKVDVTGTSKGKGFAGTVKRWNFRTQDATHGNSLSHRVPGSIGQNQTPGKVFKGKKMAGQMGNERVTVQSLDVVRVDAERNLLLVKGAVPGATGSNLIVKPAVKA.

The tract at residues Ala132–Gly153 is disordered. Residue Gln150 is modified to N5-methylglutamine.

The protein belongs to the universal ribosomal protein uL3 family. As to quaternary structure, part of the 50S ribosomal subunit. Forms a cluster with proteins L14 and L19. Post-translationally, methylated by PrmB.

One of the primary rRNA binding proteins, it binds directly near the 3'-end of the 23S rRNA, where it nucleates assembly of the 50S subunit. In Enterobacter sp. (strain 638), this protein is Large ribosomal subunit protein uL3.